We begin with the raw amino-acid sequence, 608 residues long: Lysophospholipase 2 (608 aa).

The signal sequence occupies residues 1–17; that stretch reads MLVWQSILLFLVGCVLS. The region spanning 30 to 564 is the PLA2c domain; it reads QCPEGKLTRS…ENYCWDGTIY (535 aa). 6 N-linked (GlcNAc...) asparagine glycosylation sites follow: asparagine 259, asparagine 365, asparagine 450, asparagine 464, asparagine 491, and asparagine 572.

Belongs to the lysophospholipase family.

Its subcellular location is the secreted. It carries out the reaction a 1-acyl-sn-glycero-3-phosphocholine + H2O = sn-glycerol 3-phosphocholine + a fatty acid + H(+). Its function is as follows. Catalyzes the release of fatty acids from lysophospholipids. Phospholipase B may well contribute to pathogenicity by abetting the fungus in damaging and traversing host cell membranes, processes which likely increase the rapidity of disseminated infection. This Candida albicans (Yeast) protein is Lysophospholipase 2 (PLB2).